The chain runs to 267 residues: Undecaprenyl-diphosphatase (267 aa).

7 helical membrane-spanning segments follow: residues 7-29, 41-61, 69-89, 96-116, 173-193, 207-227, and 239-259; these read LILG…HMIL, FWKS…IFVF, LDIW…GLFV, LFNG…FILI, AAEF…AYSI, IPLG…IKFF, and FGIY…SGIL.

The protein belongs to the UppP family.

It localises to the cell inner membrane. It catalyses the reaction di-trans,octa-cis-undecaprenyl diphosphate + H2O = di-trans,octa-cis-undecaprenyl phosphate + phosphate + H(+). Catalyzes the dephosphorylation of undecaprenyl diphosphate (UPP). Confers resistance to bacitracin. The sequence is that of Undecaprenyl-diphosphatase from Campylobacter jejuni subsp. jejuni serotype O:6 (strain 81116 / NCTC 11828).